Reading from the N-terminus, the 219-residue chain is Small ribosomal subunit protein uS3c (219 aa).

The region spanning Ile-43–Glu-118 is the KH type-2 domain.

This sequence belongs to the universal ribosomal protein uS3 family. Part of the 30S ribosomal subunit.

It is found in the plastid. This is Small ribosomal subunit protein uS3c (rps3) from Cuscuta exaltata (Tall dodder).